Consider the following 277-residue polypeptide: 5-formyltetrahydrofolate cyclo-ligase, mitochondrial (277 aa).

A mitochondrion-targeting transit peptide spans 1 to 48; it reads MIGARVFCITTTALRRSPIFFFPKIPTRPVFRLSPATRPIVAMSTTSK. 60–64 lines the ATP pocket; it reads KRVVR. Substrate is bound by residues glutamate 113 and 207-211; that span reads RGGGY. ATP-binding positions include 206 to 213 and aspartate 254; that span reads GRGGGYYD.

Belongs to the 5-formyltetrahydrofolate cyclo-ligase family. As to quaternary structure, monomer.

The protein localises to the mitochondrion. The catalysed reaction is (6S)-5-formyl-5,6,7,8-tetrahydrofolate + ATP = (6R)-5,10-methenyltetrahydrofolate + ADP + phosphate. Functionally, contributes to tetrahydrofolate metabolism and photorespiration through the regulation of serine hydroxymethyltransferase. Prefers the pentalutamyl to the monoglutamyl form of 5-formyltetrahydrofolate. In Arabidopsis thaliana (Mouse-ear cress), this protein is 5-formyltetrahydrofolate cyclo-ligase, mitochondrial (5FCL).